The primary structure comprises 403 residues: S-adenosylmethionine synthase (403 aa).

Position 16 (H16) interacts with ATP. D18 is a binding site for Mg(2+). E44 serves as a coordination point for K(+). The L-methionine site is built by E57 and Q100. The interval Q100–R110 is flexible loop. Residues Q106 to L126 form a disordered region. ATP is bound by residues D176 to K178, K248 to F249, D257, R263 to K264, A280, and K284. D257 provides a ligand contact to L-methionine. L-methionine is bound at residue K288.

Belongs to the AdoMet synthase family. In terms of assembly, homotetramer; dimer of dimers. It depends on Mg(2+) as a cofactor. K(+) is required as a cofactor.

The protein localises to the cytoplasm. It catalyses the reaction L-methionine + ATP + H2O = S-adenosyl-L-methionine + phosphate + diphosphate. It participates in amino-acid biosynthesis; S-adenosyl-L-methionine biosynthesis; S-adenosyl-L-methionine from L-methionine: step 1/1. In terms of biological role, catalyzes the formation of S-adenosylmethionine (AdoMet) from methionine and ATP. The overall synthetic reaction is composed of two sequential steps, AdoMet formation and the subsequent tripolyphosphate hydrolysis which occurs prior to release of AdoMet from the enzyme. The polypeptide is S-adenosylmethionine synthase (Clavibacter michiganensis subsp. michiganensis (strain NCPPB 382)).